A 933-amino-acid chain; its full sequence is Isoleucine--tRNA ligase (933 aa).

The short motif at 57–67 (PYANGNIHVGH) is the 'HIGH' region element. E554 is a binding site for L-isoleucyl-5'-AMP. A 'KMSKS' region motif is present at residues 595–599 (KMSKS). K598 is a binding site for ATP.

It belongs to the class-I aminoacyl-tRNA synthetase family. IleS type 1 subfamily. As to quaternary structure, monomer.

It is found in the cytoplasm. It catalyses the reaction tRNA(Ile) + L-isoleucine + ATP = L-isoleucyl-tRNA(Ile) + AMP + diphosphate. Its function is as follows. Catalyzes the attachment of isoleucine to tRNA(Ile). As IleRS can inadvertently accommodate and process structurally similar amino acids such as valine, to avoid such errors it has two additional distinct tRNA(Ile)-dependent editing activities. One activity is designated as 'pretransfer' editing and involves the hydrolysis of activated Val-AMP. The other activity is designated 'posttransfer' editing and involves deacylation of mischarged Val-tRNA(Ile). In Streptococcus pyogenes serotype M1, this protein is Isoleucine--tRNA ligase.